The chain runs to 379 residues: Guanine nucleotide-binding protein subunit alpha-12 (379 aa).

Cysteine 11 carries S-palmitoyl cysteine lipidation. The G-alpha domain maps to 54-379 (RLVKILLLGA…QENLKDIMLQ (326 aa)). The tract at residues 57–70 (KILLLGAGESGKST) is G1 motif. Residues 65 to 70 (ESGKST) and 200 to 203 (LLAR) contribute to the GTP site. Serine 69 contacts Mg(2+). The tract at residues 198–206 (DILLARKAT) is G2 motif. Threonine 206 serves as a coordination point for Mg(2+). Threonine 206 bears the Phosphothreonine mark. The interval 221–230 (FKMVDVGGQR) is G3 motif. Residues 290–297 (ILFLNKMD) form a G4 motif region. Residues 294 to 297 (NKMD) and alanine 351 contribute to the GTP site. The segment at 349 to 354 (TTAIDT) is G5 motif.

This sequence belongs to the G-alpha family. G(12) subfamily. In terms of assembly, g proteins are composed of 3 units; alpha, beta and gamma. The alpha chain contains the guanine nucleotide binding site. Interacts with UBXD5. Interacts (in GTP-bound form) with PPP5C (via TPR repeats); activates PPP5C phosphatase activity and translocates PPP5C to the cell membrane. Interacts with RGS22. Interacts (via N-terminus) with NAPA; the interaction promotes CDH5 localization to plasma membrane. Interacts with CTNND1 (via N-terminus); the interaction regulates CDH1-mediated cell-cell adhesion. Interacts with PPP2R1A; the interaction promotes protein phosphatase 2A activation causing dephosphorylation of MAPT. Interacts (in GTP-bound form) with ARHGEF1. Interacts (in GTP-bound form) with ARHGEF11 (via RGS domain). Interacts (in GTP-bound form) with ARHGEF12 (via RGS domain).

The protein localises to the cell membrane. The protein resides in the lateral cell membrane. It localises to the cytoplasm. In terms of biological role, guanine nucleotide-binding proteins (G proteins) are involved as modulators or transducers in various transmembrane signaling systems. Activates effector molecule RhoA by binding and activating RhoGEFs (ARHGEF12/LARG). GNA12-dependent Rho signaling subsequently regulates transcription factor AP-1 (activating protein-1). GNA12-dependent Rho signaling also regulates protein phosphatese 2A activation causing dephosphorylation of its target proteins. Promotes tumor cell invasion and metastasis by activating RhoA/ROCK signaling pathway and up-regulating pro-inflammatory cytokine production. Inhibits CDH1-mediated cell adhesion in process independent from Rho activation. Together with NAPA promotes CDH5 localization to plasma membrane. May play a role in the control of cell migration through the TOR signaling cascade. This Rattus norvegicus (Rat) protein is Guanine nucleotide-binding protein subunit alpha-12 (Gna12).